Reading from the N-terminus, the 233-residue chain is Large ribosomal subunit protein uL1 (233 aa).

The protein belongs to the universal ribosomal protein uL1 family. Part of the 50S ribosomal subunit.

Functionally, binds directly to 23S rRNA. The L1 stalk is quite mobile in the ribosome, and is involved in E site tRNA release. In terms of biological role, protein L1 is also a translational repressor protein, it controls the translation of the L11 operon by binding to its mRNA. In Polynucleobacter necessarius subsp. necessarius (strain STIR1), this protein is Large ribosomal subunit protein uL1.